Reading from the N-terminus, the 280-residue chain is Fructose-1,6-bisphosphatase/inositol-1-monophosphatase (280 aa).

Glutamate 73, aspartate 94, leucine 96, and aspartate 97 together coordinate Mg(2+). Residues 97–99 (DGT), arginine 195, valine 200, and arginine 219 contribute to the substrate site. Residue aspartate 226 coordinates Mg(2+).

It belongs to the inositol monophosphatase superfamily. FBPase class 4 family. Requires Mg(2+) as cofactor.

It carries out the reaction beta-D-fructose 1,6-bisphosphate + H2O = beta-D-fructose 6-phosphate + phosphate. It catalyses the reaction a myo-inositol phosphate + H2O = myo-inositol + phosphate. Its function is as follows. Phosphatase with broad specificity; it can dephosphorylate fructose 1,6-bisphosphate, and both D and L isomers of inositol-1-phosphate (I-1-P). This chain is Fructose-1,6-bisphosphatase/inositol-1-monophosphatase (suhB), found in Methanothermobacter thermautotrophicus (strain ATCC 29096 / DSM 1053 / JCM 10044 / NBRC 100330 / Delta H) (Methanobacterium thermoautotrophicum).